Consider the following 300-residue polypeptide: Transcriptional dual regulator GltC (300 aa).

An HTH lysR-type domain is found at 1–58; it reads MELRQLRYFMEVAEREHVSEAADHLHVAQSAISRQIANLEEELNVTLFEREGRNIKLT. The H-T-H motif DNA-binding region spans 18–37; sequence VSEAADHLHVAQSAISRQIA.

The protein belongs to the LysR transcriptional regulatory family. Interacts with gutamate dehydrogenase RocG.

Activated by alpha-ketoglutarate and inhibited by glutamate and by RocG. Positive regulator of glutamate biosynthesis (gltAB genes). Negatively regulates its own expression. The protein is Transcriptional dual regulator GltC (gltC) of Bacillus subtilis (strain 168).